Consider the following 575-residue polypeptide: E3 ubiquitin-protein ligase kcmf-1 (575 aa).

A ZZ-type zinc finger spans residues 9–73 (HEGVSCDGCA…PMQLILSSVD (65 aa)). Zn(2+) is bound by residues Cys-14, Cys-17, Cys-29, Cys-32, Cys-38, Cys-41, His-59, and His-63. 2 disordered regions span residues 277–306 (PIYPPTSDESGDETPQPAADSADESEDDND) and 530–575 (EADE…INID). Composition is skewed to acidic residues over residues 297–306 (SADESEDDND) and 530–563 (EADEAITNSEDEEIVGGETSGDDEDEQEDDENDS).

Belongs to the KCMF1 family.

Its subcellular location is the cytoplasm. It is found in the late endosome. The protein localises to the lysosome. The enzyme catalyses S-ubiquitinyl-[E2 ubiquitin-conjugating enzyme]-L-cysteine + [acceptor protein]-L-lysine = [E2 ubiquitin-conjugating enzyme]-L-cysteine + N(6)-ubiquitinyl-[acceptor protein]-L-lysine.. It participates in protein modification; protein ubiquitination. Its function is as follows. E3 ubiquitin-protein ligase which accepts ubiquitin from an E2 ubiquitin-conjugating enzyme and then transfers it to targeted substrates, promoting their degradation by the proteasome. In Caenorhabditis elegans, this protein is E3 ubiquitin-protein ligase kcmf-1.